Consider the following 169-residue polypeptide: NAD(P)H-quinone oxidoreductase subunit J, chloroplastic (169 aa).

The protein belongs to the complex I 30 kDa subunit family. In terms of assembly, NDH is composed of at least 16 different subunits, 5 of which are encoded in the nucleus.

The protein localises to the plastid. The protein resides in the chloroplast thylakoid membrane. The enzyme catalyses a plastoquinone + NADH + (n+1) H(+)(in) = a plastoquinol + NAD(+) + n H(+)(out). The catalysed reaction is a plastoquinone + NADPH + (n+1) H(+)(in) = a plastoquinol + NADP(+) + n H(+)(out). Functionally, NDH shuttles electrons from NAD(P)H:plastoquinone, via FMN and iron-sulfur (Fe-S) centers, to quinones in the photosynthetic chain and possibly in a chloroplast respiratory chain. The immediate electron acceptor for the enzyme in this species is believed to be plastoquinone. Couples the redox reaction to proton translocation, and thus conserves the redox energy in a proton gradient. This Marchantia polymorpha (Common liverwort) protein is NAD(P)H-quinone oxidoreductase subunit J, chloroplastic.